A 246-amino-acid polypeptide reads, in one-letter code: Probable transcriptional regulatory protein HSM_1763 (246 aa).

Belongs to the TACO1 family.

It is found in the cytoplasm. The chain is Probable transcriptional regulatory protein HSM_1763 from Histophilus somni (strain 2336) (Haemophilus somnus).